The primary structure comprises 404 residues: Cysteine desulfurase IscS (404 aa).

Residues 75-76, asparagine 155, glutamine 183, and 203-205 contribute to the pyridoxal 5'-phosphate site; these read AT and SAH. Position 206 is an N6-(pyridoxal phosphate)lysine (lysine 206). Threonine 243 is a pyridoxal 5'-phosphate binding site. Catalysis depends on cysteine 328, which acts as the Cysteine persulfide intermediate. Cysteine 328 is a binding site for [2Fe-2S] cluster.

Belongs to the class-V pyridoxal-phosphate-dependent aminotransferase family. NifS/IscS subfamily. As to quaternary structure, homodimer. Forms a heterotetramer with IscU, interacts with other sulfur acceptors. The cofactor is pyridoxal 5'-phosphate.

The protein resides in the cytoplasm. It catalyses the reaction (sulfur carrier)-H + L-cysteine = (sulfur carrier)-SH + L-alanine. Its pathway is cofactor biosynthesis; iron-sulfur cluster biosynthesis. In terms of biological role, master enzyme that delivers sulfur to a number of partners involved in Fe-S cluster assembly, tRNA modification or cofactor biosynthesis. Catalyzes the removal of elemental sulfur atoms from cysteine to produce alanine. Functions as a sulfur delivery protein for Fe-S cluster synthesis onto IscU, an Fe-S scaffold assembly protein, as well as other S acceptor proteins. This chain is Cysteine desulfurase IscS, found in Pseudomonas fluorescens (strain SBW25).